Consider the following 357-residue polypeptide: Acyl-coenzyme A diphosphatase NUDT19 (357 aa).

The 233-residue stretch at 10–242 (AATVMLAAGW…IWLAPPQFYE (233 aa)) folds into the Nudix hydrolase domain. The Nudix box signature appears at 97-118 (AALPDDVALRICAIRETFEEAG). Mg(2+) is bound by residues Glu112 and Glu116. Position 300 is an N6-succinyllysine (Lys300). Residues 355–357 (ARL) carry the Microbody targeting signal motif.

The protein belongs to the Nudix hydrolase family. In terms of assembly, monomer. Mg(2+) serves as cofactor. It depends on Mn(2+) as a cofactor.

It is found in the peroxisome. The enzyme catalyses an acyl-CoA + H2O = an acyl-4'-phosphopantetheine + adenosine 3',5'-bisphosphate + 2 H(+). The catalysed reaction is CoA + H2O = (R)-4'-phosphopantetheine + adenosine 3',5'-bisphosphate + 2 H(+). It catalyses the reaction hexanoyl-CoA + H2O = hexanoyl-4'-phosphopantetheine + adenosine 3',5'-bisphosphate + 2 H(+). It carries out the reaction octanoyl-CoA + H2O = S-octanoyl-4'-phosphopantetheine + adenosine 3',5'-bisphosphate + 2 H(+). The enzyme catalyses butanoyl-CoA + H2O = S-butanoyl-4'-phosphopantetheine + adenosine 3',5'-bisphosphate + 2 H(+). The catalysed reaction is propanoyl-CoA + H2O = propanoyl-4'-phosphopantetheine + adenosine 3',5'-bisphosphate + 2 H(+). It catalyses the reaction malonyl-CoA + H2O = malonyl-4'-phosphopantetheine + adenosine 3',5'-bisphosphate + 2 H(+). It carries out the reaction succinyl-CoA + H2O = succinyl-4'-phosphopantetheine + adenosine 3',5'-bisphosphate + 2 H(+). The enzyme catalyses choloyl-CoA + H2O = S-choloyl-4'-phosphopantetheine + adenosine 3',5'-bisphosphate + 2 H(+). The catalysed reaction is 4,8-dimethylnonanoyl-CoA + H2O = S-(4,8-dimethylnonanoyl)-4'-phosphopantetheine + adenosine 3',5'-bisphosphate + 2 H(+). It catalyses the reaction (9Z,12Z,15Z)-octadecatrienoyl-CoA + H2O = S-(9Z,12Z,15Z-octadecatrienoyl)-4'-phosphopantetheine + adenosine 3',5'-bisphosphate + 2 H(+). It carries out the reaction (9Z,12Z)-octadecadienoyl-CoA + H2O = S-(9Z,12Z-octadecadienoyl)-4'-phosphopantetheine + adenosine 3',5'-bisphosphate + 2 H(+). The enzyme catalyses (9Z)-hexadecenoyl-CoA + H2O = S-(9Z-hexadecenoyl)-4'-phosphopantetheine + adenosine 3',5'-bisphosphate + 2 H(+). The catalysed reaction is (9Z)-tetradecenoyl-CoA + H2O = S-(9Z-tetradecenoyl)-4'-phosphopantetheine + adenosine 3',5'-bisphosphate + 2 H(+). It catalyses the reaction (6Z)-octenoyl-CoA + H2O = S-(6Z-octenoyl)-4'-phosphopantetheine + adenosine 3',5'-bisphosphate + 2 H(+). It carries out the reaction hexadecanoyl-CoA + H2O = S-hexadecanoyl-4'-phosphopantetheine + adenosine 3',5'-bisphosphate + 2 H(+). The enzyme catalyses tetradecanoyl-CoA + H2O = tetradecanoyl-4'-phosphopantetheine + adenosine 3',5'-bisphosphate + 2 H(+). The catalysed reaction is dodecanoyl-CoA + H2O = S-dodecanoyl-4'-phosphopantetheine + adenosine 3',5'-bisphosphate + 2 H(+). It catalyses the reaction a 5'-end CoA-ribonucleoside in mRNA + H2O = a 5'-end phospho-adenosine-phospho-ribonucleoside in mRNA + (R)-4'-phosphopantetheine + 2 H(+). Functionally, fatty acyl-coenzyme A (CoA) diphosphatase that hydrolyzes fatty acyl-CoA to yield acyl-4'-phosphopantetheine and adenosine 3',5'-bisphosphate. Mediates the hydrolysis of a wide range of CoA esters, including choloyl-CoA and branched-chain fatty-acyl-CoA esters and at low substrate concentrations medium and long-chain fatty-acyl-CoA esters are the primary substrates. Highest activity seen with medium-chain acyl-CoA esters and higher rates of activity seen with the unsaturated acyl-CoA esters compared with the saturated esters. Exhibits decapping activity towards dpCoA-capped RNAs in vitro. The sequence is that of Acyl-coenzyme A diphosphatase NUDT19 (Nudt19) from Rattus norvegicus (Rat).